The primary structure comprises 148 residues: Protein Turandot Z (148 aa).

Positions 1–23 (MYFAIRLSFVLAVLFCLTGNGSA) are cleaved as a signal peptide.

Belongs to the Turandot family.

Its subcellular location is the secreted. Functionally, a humoral factor that may play a role in stress tolerance. In Drosophila sechellia (Fruit fly), this protein is Protein Turandot Z.